We begin with the raw amino-acid sequence, 242 residues long: ATP-dependent dethiobiotin synthetase BioD (242 aa).

Residue 12–17 (EVGKTV) coordinates ATP. T16 contacts Mg(2+). The active site involves K37. S41 contributes to the substrate binding site. ATP-binding positions include D51 and 112-115 (EGAG). Mg(2+)-binding residues include D51 and E112.

It belongs to the dethiobiotin synthetase family. In terms of assembly, homodimer. It depends on Mg(2+) as a cofactor.

It is found in the cytoplasm. The enzyme catalyses (7R,8S)-7,8-diammoniononanoate + CO2 + ATP = (4R,5S)-dethiobiotin + ADP + phosphate + 3 H(+). It functions in the pathway cofactor biosynthesis; biotin biosynthesis; biotin from 7,8-diaminononanoate: step 1/2. Catalyzes a mechanistically unusual reaction, the ATP-dependent insertion of CO2 between the N7 and N8 nitrogen atoms of 7,8-diaminopelargonic acid (DAPA, also called 7,8-diammoniononanoate) to form a ureido ring. The protein is ATP-dependent dethiobiotin synthetase BioD of Bacillus cereus (strain B4264).